Here is a 220-residue protein sequence, read N- to C-terminus: Adenylate kinase (220 aa).

Position 10–15 (10–15 (GAGKGT)) interacts with ATP. Positions 30 to 59 (STGDMLRAAVKAGSPLGVEAKGYMDAGKLV) are NMP. AMP-binding positions include Thr31, Arg36, 57 to 59 (KLV), 85 to 88 (GFPR), and Gln92. The segment at 122–159 (GRRTHAASGRTYHVKFNPPKVEGQDDVTGEPLIQRDDD) is LID. Residues Arg123 and 132–133 (TY) each bind ATP. AMP-binding residues include Arg156 and Arg167. Gly206 serves as a coordination point for ATP.

The protein belongs to the adenylate kinase family. Monomer.

It is found in the cytoplasm. The catalysed reaction is AMP + ATP = 2 ADP. It functions in the pathway purine metabolism; AMP biosynthesis via salvage pathway; AMP from ADP: step 1/1. Functionally, catalyzes the reversible transfer of the terminal phosphate group between ATP and AMP. Plays an important role in cellular energy homeostasis and in adenine nucleotide metabolism. The chain is Adenylate kinase from Burkholderia vietnamiensis (strain G4 / LMG 22486) (Burkholderia cepacia (strain R1808)).